A 407-amino-acid chain; its full sequence is Phosphopentomutase (407 aa).

D11, D305, H310, D346, H347, and H358 together coordinate Mn(2+).

It belongs to the phosphopentomutase family. Mn(2+) serves as cofactor.

It is found in the cytoplasm. The enzyme catalyses 2-deoxy-alpha-D-ribose 1-phosphate = 2-deoxy-D-ribose 5-phosphate. The catalysed reaction is alpha-D-ribose 1-phosphate = D-ribose 5-phosphate. It participates in carbohydrate degradation; 2-deoxy-D-ribose 1-phosphate degradation; D-glyceraldehyde 3-phosphate and acetaldehyde from 2-deoxy-alpha-D-ribose 1-phosphate: step 1/2. Isomerase that catalyzes the conversion of deoxy-ribose 1-phosphate (dRib-1-P) and ribose 1-phosphate (Rib-1-P) to deoxy-ribose 5-phosphate (dRib-5-P) and ribose 5-phosphate (Rib-5-P), respectively. The chain is Phosphopentomutase from Legionella pneumophila subsp. pneumophila (strain Philadelphia 1 / ATCC 33152 / DSM 7513).